The sequence spans 67 residues: DNA-directed RNA polymerase subunit omega (67 aa).

The protein belongs to the RNA polymerase subunit omega family. As to quaternary structure, the RNAP catalytic core consists of 2 alpha, 1 beta, 1 beta' and 1 omega subunit. When a sigma factor is associated with the core the holoenzyme is formed, which can initiate transcription.

The enzyme catalyses RNA(n) + a ribonucleoside 5'-triphosphate = RNA(n+1) + diphosphate. In terms of biological role, promotes RNA polymerase assembly. Latches the N- and C-terminal regions of the beta' subunit thereby facilitating its interaction with the beta and alpha subunits. In Moorella thermoacetica (strain ATCC 39073 / JCM 9320), this protein is DNA-directed RNA polymerase subunit omega.